The primary structure comprises 143 residues: Ribosome maturation factor RimP (143 aa).

The protein belongs to the RimP family.

The protein resides in the cytoplasm. Required for maturation of 30S ribosomal subunits. This chain is Ribosome maturation factor RimP, found in Borrelia hermsii (strain HS1 / DAH).